Here is a 1492-residue protein sequence, read N- to C-terminus: DNA polymerase alpha catalytic subunit (1492 aa).

Disordered regions lie at residues 34–112 (DFIV…VEQS), 162–195 (SVTL…DVNP), and 210–234 (ANSY…EMAN). The span at 42 to 55 (YGYRDHGGEIWDRD) shows a compositional bias: basic and acidic residues. Residues 93–105 (NAASTNPSAQQKP) are compositionally biased toward polar residues. The segment covering 166–178 (ESREEQERRRQSE) has biased composition (basic and acidic residues). Polar residues-rich tracts occupy residues 184–194 (ANIGQNQSDVN) and 210–224 (ANSY…SVSK). The Zn(2+) site is built by Cys-1314, Cys-1317, Cys-1341, Cys-1344, Cys-1375, Cys-1380, Cys-1393, and Cys-1398. The segment at 1314 to 1344 (CPHCAHNYHFPGILVPSSNNTELTGLACVKC) adopts a CysA-type zinc-finger fold. A CysB motif motif is present at residues 1375 to 1398 (CKEPQCGMKTNQLLLNNKCIVKGC).

This sequence belongs to the DNA polymerase type-B family.

The protein resides in the nucleus. The catalysed reaction is DNA(n) + a 2'-deoxyribonucleoside 5'-triphosphate = DNA(n+1) + diphosphate. Functionally, polymerase alpha in a complex with DNA primase is a replicative polymerase. The chain is DNA polymerase alpha catalytic subunit from Sterkiella nova (Ciliate).